Consider the following 196-residue polypeptide: RNA-free ribonuclease P (196 aa).

This sequence belongs to the HARP family.

It carries out the reaction Endonucleolytic cleavage of RNA, removing 5'-extranucleotides from tRNA precursor.. Functionally, RNA-free RNase P that catalyzes the removal of the 5'-leader sequence from pre-tRNA to produce the mature 5'-terminus. In Thermodesulfovibrio yellowstonii (strain ATCC 51303 / DSM 11347 / YP87), this protein is RNA-free ribonuclease P.